The following is a 343-amino-acid chain: Dihydroorotase (343 aa).

Zn(2+) contacts are provided by H13 and H15. Residues 15-17 (HLR) and N41 each bind substrate. Residues K99, H136, and H174 each coordinate Zn(2+). N6-carboxylysine is present on K99. Residue H136 coordinates substrate. Position 219 (L219) interacts with substrate. D247 serves as a coordination point for Zn(2+). D247 is a catalytic residue. Residues H251 and A263 each coordinate substrate.

It belongs to the metallo-dependent hydrolases superfamily. DHOase family. Class II DHOase subfamily. In terms of assembly, homodimer. Zn(2+) is required as a cofactor.

The catalysed reaction is (S)-dihydroorotate + H2O = N-carbamoyl-L-aspartate + H(+). It functions in the pathway pyrimidine metabolism; UMP biosynthesis via de novo pathway; (S)-dihydroorotate from bicarbonate: step 3/3. Catalyzes the reversible cyclization of carbamoyl aspartate to dihydroorotate. In Shewanella oneidensis (strain ATCC 700550 / JCM 31522 / CIP 106686 / LMG 19005 / NCIMB 14063 / MR-1), this protein is Dihydroorotase.